The primary structure comprises 492 residues: Aerolysin-3 (492 aa).

An N-terminal signal peptide occupies residues 1–23 (MKKLKITGLSLIISGLLMAQAQA). Disulfide bonds link Cys-42-Cys-98 and Cys-182-Cys-187. The interval 68 to 84 (WQISGLANGWVIMGPGY) is interaction with host N-linked glycan. The interval 256 to 288 (YGLSEKVTTKNKFKWPLVGETELSIEIAANQSW) is part of the transmembrane beta-barrel after proteolytic activation of the toxin and insertion into the host membrane. An interaction with glycans from host GPI-anchor region spans residues 346–355 (RWGGNAWYTH). A propeptide spanning residues 446-492 (AAASHSSRARNLSAGQGLRLEIPLDAQELSGLGFNNVSLSVTPAANQ) is cleaved from the precursor.

The protein belongs to the aerolysin family. Homodimer in solution; homoheptamer in the host membrane. After binding to GPI-anchored proteins in target membranes and proteolytic removal of the C-terminal propeptide, the protein assembles into a heptameric pre-pore complex. A further conformation change leads to insertion into the host membrane. In terms of processing, proteolytic cleavage and subsequent release of the propeptide trigger a major conformation change, leading to the formation of a heptameric pre-pore that then inserts into the host membrane.

The protein resides in the secreted. It localises to the host cell membrane. Functionally, secreted, cytolytic toxin that forms pores in host membranes after proteolytic removal of a C-terminal propeptide, leading to destruction of the membrane permeability barrier and cell death. The pores are formed by transmembrane beta-strands and are approximately 3 nm in diameter. The protein is Aerolysin-3 (ahh3) of Aeromonas hydrophila.